The chain runs to 391 residues: Putative B3 domain-containing protein Os08g0325100 (391 aa).

Positions 32–125 (GDFQHEIRGE…QFDVIIFDQV (94 aa)) form a DNA-binding region, TF-B3. Positions 143–232 (VQEGRTDATE…SSRAHPQPMP (90 aa)) are disordered. Residues 172–226 (EGRTNATETLNSSRAHSQPMPMQTPATETLNSSRAHSQDMPMQSPATETLNSSRA) are compositionally biased toward polar residues.

It localises to the nucleus. This is Putative B3 domain-containing protein Os08g0325100 from Oryza sativa subsp. japonica (Rice).